The sequence spans 469 residues: Glutamate--tRNA ligase (469 aa).

A 'HIGH' region motif is present at residues 11–21; sequence PSPTGFIHLGN. Over residues 114–131 the composition is skewed to basic and acidic residues; it reads QREAGEKPRYDGTWRPEP. The segment at 114 to 139 is disordered; that stretch reads QREAGEKPRYDGTWRPEPGKVLPEPP. The 'KMSKS' region signature appears at 243–247; it reads KMSKR. Position 246 (K246) interacts with ATP.

Belongs to the class-I aminoacyl-tRNA synthetase family. Glutamate--tRNA ligase type 1 subfamily. Monomer.

The protein localises to the cytoplasm. The enzyme catalyses tRNA(Glu) + L-glutamate + ATP = L-glutamyl-tRNA(Glu) + AMP + diphosphate. Functionally, catalyzes the attachment of glutamate to tRNA(Glu) in a two-step reaction: glutamate is first activated by ATP to form Glu-AMP and then transferred to the acceptor end of tRNA(Glu). The polypeptide is Glutamate--tRNA ligase (Paraburkholderia phytofirmans (strain DSM 17436 / LMG 22146 / PsJN) (Burkholderia phytofirmans)).